The primary structure comprises 379 residues: Succinyl-diaminopimelate desuccinylase (379 aa).

His70 is a Zn(2+) binding site. Asp72 is a catalytic residue. Residue Asp103 coordinates Zn(2+). Glu137 serves as the catalytic Proton acceptor. 3 residues coordinate Zn(2+): Glu138, Glu166, and His352.

Belongs to the peptidase M20A family. DapE subfamily. Homodimer. Zn(2+) is required as a cofactor. It depends on Co(2+) as a cofactor.

It catalyses the reaction N-succinyl-(2S,6S)-2,6-diaminopimelate + H2O = (2S,6S)-2,6-diaminopimelate + succinate. It functions in the pathway amino-acid biosynthesis; L-lysine biosynthesis via DAP pathway; LL-2,6-diaminopimelate from (S)-tetrahydrodipicolinate (succinylase route): step 3/3. In terms of biological role, catalyzes the hydrolysis of N-succinyl-L,L-diaminopimelic acid (SDAP), forming succinate and LL-2,6-diaminopimelate (DAP), an intermediate involved in the bacterial biosynthesis of lysine and meso-diaminopimelic acid, an essential component of bacterial cell walls. The sequence is that of Succinyl-diaminopimelate desuccinylase from Burkholderia orbicola (strain MC0-3).